Here is a 411-residue protein sequence, read N- to C-terminus: ACT domain-containing protein ACR9 (411 aa).

3 consecutive ACT domains span residues 22 to 105 (VVTV…NVSK), 111 to 194 (LLKF…LAGP), and 243 to 322 (LLQI…VIIV).

May bind amino acids. In Arabidopsis thaliana (Mouse-ear cress), this protein is ACT domain-containing protein ACR9.